A 280-amino-acid polypeptide reads, in one-letter code: UPF0276 protein NGO_1946 (280 aa).

This sequence belongs to the UPF0276 family.

The sequence is that of UPF0276 protein NGO_1946 from Neisseria gonorrhoeae (strain ATCC 700825 / FA 1090).